Consider the following 501-residue polypeptide: Ribose import ATP-binding protein RbsA (501 aa).

2 consecutive ABC transporter domains span residues 5-241 (LQLQ…VGRK) and 252-495 (APGE…VGKQ). 37–44 (GENGAGKS) is a binding site for ATP.

This sequence belongs to the ABC transporter superfamily. Ribose importer (TC 3.A.1.2.1) family. In terms of assembly, the complex is composed of an ATP-binding protein (RbsA), two transmembrane proteins (RbsC) and a solute-binding protein (RbsB).

It localises to the cell inner membrane. The catalysed reaction is D-ribose(out) + ATP + H2O = D-ribose(in) + ADP + phosphate + H(+). In terms of biological role, part of the ABC transporter complex RbsABC involved in ribose import. Responsible for energy coupling to the transport system. This is Ribose import ATP-binding protein RbsA from Pectobacterium atrosepticum (strain SCRI 1043 / ATCC BAA-672) (Erwinia carotovora subsp. atroseptica).